A 244-amino-acid polypeptide reads, in one-letter code: 23S rRNA (guanosine-2'-O-)-methyltransferase RlmB (244 aa).

S-adenosyl-L-methionine contacts are provided by Gly196, Ile216, and Leu225.

This sequence belongs to the class IV-like SAM-binding methyltransferase superfamily. RNA methyltransferase TrmH family. RlmB subfamily. As to quaternary structure, homodimer.

The protein resides in the cytoplasm. It catalyses the reaction guanosine(2251) in 23S rRNA + S-adenosyl-L-methionine = 2'-O-methylguanosine(2251) in 23S rRNA + S-adenosyl-L-homocysteine + H(+). Specifically methylates the ribose of guanosine 2251 in 23S rRNA. This is 23S rRNA (guanosine-2'-O-)-methyltransferase RlmB from Photorhabdus laumondii subsp. laumondii (strain DSM 15139 / CIP 105565 / TT01) (Photorhabdus luminescens subsp. laumondii).